A 708-amino-acid chain; its full sequence is Exocyst complex component 5 (708 aa).

A2 is modified (N-acetylalanine). Residues K40–E101 are a coiled coil. 3 positions are modified to phosphothreonine: T122, T395, and T405. S412 bears the Phosphoserine mark.

This sequence belongs to the SEC10 family. In terms of assembly, the exocyst complex is composed of EXOC1, EXOC2, EXOC3, EXOC4, EXOC5, EXOC6, EXOC7 and EXOC8. Interacts with EXOC3L1.

The protein localises to the cytoplasm. It localises to the midbody. Functionally, component of the exocyst complex involved in the docking of exocytic vesicles with fusion sites on the plasma membrane. The chain is Exocyst complex component 5 (Exoc5) from Mus musculus (Mouse).